Reading from the N-terminus, the 198-residue chain is Glycerol-3-phosphate acyltransferase (198 aa).

Transmembrane regions (helical) follow at residues 10–30, 57–77, 86–106, 118–138, and 160–180; these read LIPI…WILV, GISF…ILIL, IMYL…WFLF, VVLS…AVVF, and AVTE…IVLI.

It belongs to the PlsY family. Probably interacts with PlsX.

It localises to the cell inner membrane. The catalysed reaction is an acyl phosphate + sn-glycerol 3-phosphate = a 1-acyl-sn-glycero-3-phosphate + phosphate. The protein operates within lipid metabolism; phospholipid metabolism. Functionally, catalyzes the transfer of an acyl group from acyl-phosphate (acyl-PO(4)) to glycerol-3-phosphate (G3P) to form lysophosphatidic acid (LPA). This enzyme utilizes acyl-phosphate as fatty acyl donor, but not acyl-CoA or acyl-ACP. This Anaplasma marginale (strain Florida) protein is Glycerol-3-phosphate acyltransferase.